The following is a 337-amino-acid chain: uncharacterized protein (337 aa).

2 helical membrane passes run F241 to I261 and A273 to I293.

Belongs to the glycosyltransferase 2 family.

It localises to the cell membrane. This is an uncharacterized protein from Bacillus subtilis (strain 168).